A 272-amino-acid chain; its full sequence is Nitrogenase iron protein (272 aa).

Glycine 8–serine 15 provides a ligand contact to ATP. Cysteine 94 contributes to the [4Fe-4S] cluster binding site. ADP-ribosylarginine; by dinitrogenase reductase ADP-ribosyltransferase is present on arginine 97. Residue cysteine 129 coordinates [4Fe-4S] cluster.

Belongs to the NifH/BchL/ChlL family. Homodimer. The cofactor is [4Fe-4S] cluster. Post-translationally, the reversible ADP-ribosylation of Arg-97 inactivates the nitrogenase reductase and regulates nitrogenase activity.

It carries out the reaction N2 + 8 reduced [2Fe-2S]-[ferredoxin] + 16 ATP + 16 H2O = H2 + 8 oxidized [2Fe-2S]-[ferredoxin] + 2 NH4(+) + 16 ADP + 16 phosphate + 6 H(+). Functionally, the key enzymatic reactions in nitrogen fixation are catalyzed by the nitrogenase complex, which has 2 components: the iron protein and the molybdenum-iron protein. The polypeptide is Nitrogenase iron protein (Alkaliphilus metalliredigens (strain QYMF)).